A 235-amino-acid polypeptide reads, in one-letter code: MASAEGGGDKYRSFLHGDGEKKTVWRHGAPPNYDLVNKLFEEERTKEWAEGSVEEKVQRLLKTWEMEMVHKVRPEDQKSVNLKNYSASTNGLKPLTREEVMAMGGYNAFLATTLPPEHRIYDPEAESVESATSTFLTAFPRGFAIEVLDVYSSPSAPRIAFKFRHWGYMEGPFKGHPPHGGRVEFFGVCVFHVDEDTKVEKAEFFYERGNFLASFLTAPAASASASGCPVMRGAD.

The sequence is that of Pathogen-related protein from Hordeum vulgare (Barley).